The sequence spans 186 residues: Mating-type-like protein ALPHA2 (186 aa).

Positions 108–170 (ASYRGHRFTR…NRRRKQKSIY (63 aa)) form a DNA-binding region, homeobox; TALE-type.

It belongs to the TALE/M-ATYP homeobox family.

The protein resides in the nucleus. Its function is as follows. Mating type proteins are sequence specific DNA-binding proteins that act as master switches in yeast differentiation by controlling gene expression in a cell type-specific fashion. The polypeptide is Mating-type-like protein ALPHA2 (MTL1ALPHA2) (Candida glabrata (strain ATCC 2001 / BCRC 20586 / JCM 3761 / NBRC 0622 / NRRL Y-65 / CBS 138) (Yeast)).